The following is a 156-amino-acid chain: MARRRRPEKREILPDPKFGDVVLSKFMNSVMLDGKKSVAEGIVYGALETIETRAKREPLGVFHEALNNVKPGIEVRSRRVGGATYQVPVEVRPDRSQALAIRWLISAARARSEHTMAGRLSGELLDAANNRGNAVKKREDTHRMAEANRAFSHYRW.

Belongs to the universal ribosomal protein uS7 family. Part of the 30S ribosomal subunit. Contacts proteins S9 and S11.

One of the primary rRNA binding proteins, it binds directly to 16S rRNA where it nucleates assembly of the head domain of the 30S subunit. Is located at the subunit interface close to the decoding center, probably blocks exit of the E-site tRNA. In Rhizorhabdus wittichii (strain DSM 6014 / CCUG 31198 / JCM 15750 / NBRC 105917 / EY 4224 / RW1) (Sphingomonas wittichii), this protein is Small ribosomal subunit protein uS7.